A 318-amino-acid chain; its full sequence is Putative HTH-type transcriptional regulatory protein TK0539 (318 aa).

Residues 131 to 189 (LRELREKHGYSVNELAQLLGVSRKSLLNYERGEQAVSLDVAIQLEEIFDEALAEPIDIL) form the HTH cro/C1-type domain. The H-T-H motif DNA-binding region spans 142 to 161 (VNELAQLLGVSRKSLLNYER).

In Thermococcus kodakarensis (strain ATCC BAA-918 / JCM 12380 / KOD1) (Pyrococcus kodakaraensis (strain KOD1)), this protein is Putative HTH-type transcriptional regulatory protein TK0539.